Consider the following 955-residue polypeptide: RNA polymerase-associated protein RapA (955 aa).

In terms of domain architecture, Helicase ATP-binding spans Glu163 to Glu333. Asp176–Thr183 contributes to the ATP binding site. Positions Asp279–His282 match the DEAH box motif. The Helicase C-terminal domain maps to Arg478–Leu642.

The protein belongs to the SNF2/RAD54 helicase family. RapA subfamily. In terms of assembly, interacts with the RNAP. Has a higher affinity for the core RNAP than for the holoenzyme. Its ATPase activity is stimulated by binding to RNAP.

Its function is as follows. Transcription regulator that activates transcription by stimulating RNA polymerase (RNAP) recycling in case of stress conditions such as supercoiled DNA or high salt concentrations. Probably acts by releasing the RNAP, when it is trapped or immobilized on tightly supercoiled DNA. Does not activate transcription on linear DNA. Probably not involved in DNA repair. The sequence is that of RNA polymerase-associated protein RapA from Aeromonas hydrophila subsp. hydrophila (strain ATCC 7966 / DSM 30187 / BCRC 13018 / CCUG 14551 / JCM 1027 / KCTC 2358 / NCIMB 9240 / NCTC 8049).